The chain runs to 118 residues: Holo-[acyl-carrier-protein] synthase (118 aa).

Mg(2+)-binding residues include D5 and E50.

It belongs to the P-Pant transferase superfamily. AcpS family. Mg(2+) is required as a cofactor.

It localises to the cytoplasm. It catalyses the reaction apo-[ACP] + CoA = holo-[ACP] + adenosine 3',5'-bisphosphate + H(+). Transfers the 4'-phosphopantetheine moiety from coenzyme A to a Ser of acyl-carrier-protein. This Wolinella succinogenes (strain ATCC 29543 / DSM 1740 / CCUG 13145 / JCM 31913 / LMG 7466 / NCTC 11488 / FDC 602W) (Vibrio succinogenes) protein is Holo-[acyl-carrier-protein] synthase.